Here is a 394-residue protein sequence, read N- to C-terminus: Guanine nucleotide-binding protein G(s) subunit alpha (394 aa).

The tract at residues 1-23 (MGCLGNSKTEDQRNEEKAQREAN) is disordered. Gly-2 carries the N-palmitoyl glycine lipid modification. A lipid anchor (S-palmitoyl cysteine) is attached at Cys-3. Positions 8-23 (KTEDQRNEEKAQREAN) are enriched in basic and acidic residues. Residues 39 to 394 (ATHRLLLLGA…RMHLRQYELL (356 aa)) enclose the G-alpha domain. A G1 motif region spans residues 42 to 55 (RLLLLGAGESGKST). Position 47–55 (47–55 (GAGESGKST)) interacts with GTP. Ser-54 serves as a coordination point for Mg(2+). Residues 68–91 (FNGEGGEEDPQAARSNSDGEKATK) form a disordered region. The G2 motif stretch occupies residues 196–204 (DLLRCRVLT). GTP-binding positions include 197-204 (LLRCRVLT), 223-227 (DVGGQ), 292-295 (NKQD), and Ala-366. Position 204 (Thr-204) interacts with Mg(2+). Residues 219-228 (FHMFDVGGQR) are G3 motif. The segment at 288-295 (ILFLNKQD) is G4 motif. Positions 364–369 (TCAVDT) are G5 motif.

The protein belongs to the G-alpha family. G(s) subfamily. Heterotrimeric G proteins are composed of 3 units; alpha, beta and gamma. The alpha chain contains the guanine nucleotide binding site. Interacts with CRY1; the interaction may block GPCR-mediated regulation of cAMP concentrations. Interacts with ADCY6 and stimulates its adenylyl cyclase activity. Interacts with ADCY2 and ADCY5. Stimulates the ADCY5 adenylyl cyclase activity. Interaction with SASH1.

Its subcellular location is the cell membrane. In terms of biological role, guanine nucleotide-binding proteins (G proteins) function as transducers in numerous signaling pathways controlled by G protein-coupled receptors (GPCRs). Signaling involves the activation of adenylyl cyclases, resulting in increased levels of the signaling molecule cAMP. GNAS functions downstream of several GPCRs, including beta-adrenergic receptors. Stimulates the Ras signaling pathway via RAPGEF2. This is Guanine nucleotide-binding protein G(s) subunit alpha (GNAS) from Canis lupus familiaris (Dog).